Consider the following 309-residue polypeptide: Putative ankyrin repeat protein R603 (309 aa).

7 ANK repeats span residues 53 to 82 (QVNGYFTYCVQKNKLDAIQYLYENNLMNPE), 83 to 112 (NKSQLFKIAIVHGNIDVLKLVIDYGIDVSL), 114 to 144 (DHFAITVCTRPISNTENIIQLLIDNGADVTS), 145 to 176 (NNNLPIKFAILKGTINKSVLDLLINNGADIHA), 177 to 206 (DEYFCAKYAAKCCYIFALKYIINLGIDVNM), 214 to 243 (NVLSDTAYSSNEYTYSCIKTLLENGADISF), and 245 to 274 (DDNDTLKMCRGSKTRNILILLLDYGFDISF).

This is Putative ankyrin repeat protein R603 from Acanthamoeba polyphaga (Amoeba).